Consider the following 70-residue polypeptide: ATP synthase subunit epsilon, mitochondrial (70 aa).

This sequence belongs to the eukaryotic ATPase epsilon family. F-type ATPases have 2 components, CF(1) - the catalytic core - and CF(0) - the membrane proton channel. CF(1) has five subunits: alpha(3), beta(3), gamma(1), delta(1), epsilon(1). CF(0) has three main subunits: a, b and c.

The protein localises to the mitochondrion. It is found in the mitochondrion inner membrane. In terms of biological role, mitochondrial membrane ATP synthase (F(1)F(0) ATP synthase or Complex V) produces ATP from ADP in the presence of a proton gradient across the membrane which is generated by electron transport complexes of the respiratory chain. F-type ATPases consist of two structural domains, F(1) - containing the extramembraneous catalytic core, and F(0) - containing the membrane proton channel, linked together by a central stalk and a peripheral stalk. During catalysis, ATP synthesis in the catalytic domain of F(1) is coupled via a rotary mechanism of the central stalk subunits to proton translocation. Part of the complex F(1) domain and of the central stalk which is part of the complex rotary element. Rotation of the central stalk against the surrounding alpha(3)beta(3) subunits leads to hydrolysis of ATP in three separate catalytic sites on the beta subunits. In Ipomoea batatas (Sweet potato), this protein is ATP synthase subunit epsilon, mitochondrial.